The following is a 469-amino-acid chain: Glutamate--tRNA ligase 2 (469 aa).

The 'HIGH' region motif lies at 8-18 (PSPTGFLHVGG). Positions 250 to 254 (KLSKR) match the 'KMSKS' region motif. An ATP-binding site is contributed by Lys-253.

It belongs to the class-I aminoacyl-tRNA synthetase family. Glutamate--tRNA ligase type 1 subfamily. As to quaternary structure, monomer.

The protein localises to the cytoplasm. The catalysed reaction is tRNA(Glu) + L-glutamate + ATP = L-glutamyl-tRNA(Glu) + AMP + diphosphate. In terms of biological role, catalyzes the attachment of glutamate to tRNA(Glu) in a two-step reaction: glutamate is first activated by ATP to form Glu-AMP and then transferred to the acceptor end of tRNA(Glu). In Thermotoga petrophila (strain ATCC BAA-488 / DSM 13995 / JCM 10881 / RKU-1), this protein is Glutamate--tRNA ligase 2.